Consider the following 156-residue polypeptide: Inner membrane protein YlaC (156 aa).

The Cytoplasmic segment spans residues 1-35 (MTEIQRLLTETIESLNTREKRDNKPRFSISFIRKH). The chain crosses the membrane as a helical span at residues 36–56 (PGLFIGMYVAFFATLAVMLQS). Topologically, residues 57-58 (ET) are periplasmic. The helical transmembrane segment at 59–79 (LSGSVWLLVVLFILLNGFFFF) threads the bilayer. At 80-156 (DVYPRYRYED…FTLARAESTS (77 aa)) the chain is on the cytoplasmic side.

The protein resides in the cell inner membrane. The protein is Inner membrane protein YlaC (ylaC) of Escherichia coli (strain K12).